A 431-amino-acid chain; its full sequence is STE20-related kinase adapter protein alpha (431 aa).

Phosphoserine occurs at positions 2 and 46. Residues 69–379 enclose the Protein kinase domain; sequence YELLTVIGKG…ASTLLNHSFF (311 aa). The disordered stretch occupies residues 310-347; that stretch reads LTMSPSRSVANSGLSDSLTTSTPRPSNGDSPSHPYHRT. Over residues 312-339 the composition is skewed to polar residues; it reads MSPSRSVANSGLSDSLTTSTPRPSNGDS. A phosphothreonine; by LKB1 mark is found at threonine 329 and threonine 419.

The protein belongs to the protein kinase superfamily. STE Ser/Thr protein kinase family. STE20 subfamily. Component of a trimeric complex composed of STK11/LKB1, STRAD (STRADA or STRADB) and CAB39/MO25 (CAB39/MO25alpha or CAB39L/MO25beta): the complex tethers STK11/LKB1 in the cytoplasm and stimulates its catalytic activity.

Its subcellular location is the nucleus. The protein localises to the cytoplasm. Functionally, pseudokinase which, in complex with CAB39/MO25 (CAB39/MO25alpha or CAB39L/MO25beta), binds to and activates STK11/LKB1. Adopts a closed conformation typical of active protein kinases and binds STK11/LKB1 as a pseudosubstrate, promoting conformational change of STK11/LKB1 in an active conformation. This Homo sapiens (Human) protein is STE20-related kinase adapter protein alpha (STRADA).